Here is a 273-residue protein sequence, read N- to C-terminus: Octanoyltransferase LipM (273 aa).

The BPL/LPL catalytic domain occupies 33-244; it reads GKTPPTLRFY…AFTRLYAVEF (212 aa). The Acyl-thioester intermediate role is filled by C146.

The protein belongs to the octanoyltransferase LipM family. In terms of assembly, monomer.

The enzyme catalyses octanoyl-[ACP] + L-lysyl-[protein] = N(6)-octanoyl-L-lysyl-[protein] + holo-[ACP] + H(+). Its pathway is protein modification; protein lipoylation via endogenous pathway; protein N(6)-(lipoyl)lysine from octanoyl-[acyl-carrier-protein]. Its function is as follows. Catalyzes the transfer of endogenously produced octanoic acid from octanoyl-acyl-carrier-protein onto the lipoyl domain of GcvH, an intermediate carrier during protein lipoylation. The sequence is that of Octanoyltransferase LipM from Moorella thermoacetica (strain ATCC 39073 / JCM 9320).